The following is a 78-amino-acid chain: Putative membrane protein insertion efficiency factor (78 aa).

This sequence belongs to the UPF0161 family.

The protein localises to the cell membrane. Functionally, could be involved in insertion of integral membrane proteins into the membrane. The polypeptide is Putative membrane protein insertion efficiency factor (Bacillus anthracis (strain A0248)).